A 652-amino-acid chain; its full sequence is Chaperone protein HtpG (652 aa).

Positions 1 to 348 (MATDAHKETL…SDDLPLNVSR (348 aa)) are a; substrate-binding. The segment at 349–565 (ELLQHNPLLD…EYDFGMGMQR (217 aa)) is b. Residues 566-652 (LLKAAGHAMP…EAKSNAARGD (87 aa)) are c.

It belongs to the heat shock protein 90 family. In terms of assembly, homodimer.

It is found in the cytoplasm. In terms of biological role, molecular chaperone. Has ATPase activity. This Alkalilimnicola ehrlichii (strain ATCC BAA-1101 / DSM 17681 / MLHE-1) protein is Chaperone protein HtpG.